Consider the following 187-residue polypeptide: Ubiquinol-cytochrome c reductase iron-sulfur subunit (187 aa).

Residues Leu15 to Ile35 form a helical membrane-spanning segment. A Rieske domain is found at Gln89–Gln185. Cys129, His131, Cys149, and His152 together coordinate [2Fe-2S] cluster. Cys134 and Cys151 are disulfide-bonded.

It belongs to the Rieske iron-sulfur protein family. The main subunits of complex b-c1 are: cytochrome b, cytochrome c1 and the Rieske protein. [2Fe-2S] cluster is required as a cofactor.

It localises to the cell membrane. It carries out the reaction a quinol + 2 Fe(III)-[cytochrome c](out) = a quinone + 2 Fe(II)-[cytochrome c](out) + 2 H(+)(out). Component of the ubiquinol-cytochrome c reductase complex (complex III or cytochrome b-c1 complex), which is a respiratory chain that generates an electrochemical potential coupled to ATP synthesis. The sequence is that of Ubiquinol-cytochrome c reductase iron-sulfur subunit (petA) from Cereibacter sphaeroides (Rhodobacter sphaeroides).